A 305-amino-acid chain; its full sequence is DNA-directed RNA polymerase 35 kDa subunit (305 aa).

Belongs to the poxviridae DNA-directed RNA polymerase 35 kDa subunit family. As to quaternary structure, the DNA-dependent RNA polymerase used for intermediate and late genes expression consists of eight subunits 147 kDa, 133 kDa, 35 kDa, 30 kDa, 22 kDa, 19 kDa, 18 kDa and 7 kDa totalling more than 500 kDa in mass. The same holoenzyme, with the addition of the transcription-specificity factor RAP94, is used for early gene expression.

It localises to the virion. It catalyses the reaction RNA(n) + a ribonucleoside 5'-triphosphate = RNA(n+1) + diphosphate. Part of the DNA-dependent RNA polymerase which catalyzes the transcription of viral DNA into RNA using the four ribonucleoside triphosphates as substrates. Responsible for the transcription of early, intermediate and late genes. DNA-dependent RNA polymerase associates with the early transcription factor (ETF), itself composed of D6 and A7, thereby allowing the early genes transcription. Late transcription, and probably also intermediate transcription, require newly synthesized RNA polymerase. This Cynomys gunnisoni (Gunnison's prairie dog) protein is DNA-directed RNA polymerase 35 kDa subunit (OPG156).